Consider the following 174-residue polypeptide: uncharacterized protein (174 aa).

Residues 78–97 are disordered; sequence TFGRNIKTPDISNPTRARNE.

The protein to yeast YMR295c.

This is an uncharacterized protein from Saccharomyces cerevisiae (strain ATCC 204508 / S288c) (Baker's yeast).